Reading from the N-terminus, the 488-residue chain is Peptidoglycan endopeptidase LytF (488 aa).

The signal sequence occupies residues 1–26; sequence MKKKLAAGLTASAIVGTTLVVTPAEA. 2 consecutive LysM domains span residues 27 to 70 and 92 to 135; these read ATIK…TLTI and SVYT…KLKV. Disordered stretches follow at residues 70–93, 137–176, and 218–239; these read IPGS…GSSV, GTVS…TGTY, and KSSG…TSAT. Low complexity-rich tracts occupy residues 72-93 and 140-172; these read GSKS…GSSV and SSSS…SSSS. The 44-residue stretch at 174 to 217 folds into the LysM 3 domain; that stretch reads GTYKVQLGDSLWKIANKVNMSIAELKVLNNLKSDTIYVNQVLKT. A LysM 4 domain is found at 240–283; sequence TKYTVKSGDSLWKIANNYNLTVQQIRNINNLKSDVLYVGQVLKL. The tract at residues 286 to 306 is disordered; the sequence is KASSGSSSSSSSSSNASSGTT. The LysM 5 domain maps to 307–350; sequence TTYTVKSGDSLWVIAQKFNVTAQQIREKNNLKTDVLQVGQKLVI. Residues 370 to 488 form the NlpC/P60 domain; the sequence is SAKINTMISA…QRYLGAKRYF (119 aa). The active-site Nucleophile is C400. H449 serves as the catalytic Proton acceptor. Residue N461 is part of the active site.

The protein belongs to the peptidase C40 family.

It is found in the secreted. It localises to the cell wall. Is inhibited in vitro by para-hydroxymercuribenzoate, a sulfydryl inhibitor. Its function is as follows. Cell wall hydrolase that cleaves gamma-D-glutamate-meso-diaminopimelate bonds in peptidoglycan. LytF is necessary and sufficient for vegetative daughter cell separation, and also seems to play a role in cell autolysis. This Bacillus subtilis (strain 168) protein is Peptidoglycan endopeptidase LytF (lytF).